A 211-amino-acid chain; its full sequence is V-type ATP synthase subunit D (211 aa).

It belongs to the V-ATPase D subunit family.

Produces ATP from ADP in the presence of a proton gradient across the membrane. The protein is V-type ATP synthase subunit D of Enterococcus faecalis (strain ATCC 700802 / V583).